The following is a 502-amino-acid chain: Cytochrome P450 2J2 (502 aa).

C448 is a heme binding site.

It belongs to the cytochrome P450 family. The cofactor is heme. In terms of tissue distribution, highly expressed in heart, present at lower levels in liver, kidney and skeletal muscle (at protein level).

Its subcellular location is the endoplasmic reticulum membrane. The protein localises to the microsome membrane. It carries out the reaction (5Z,8Z,11Z,14Z)-eicosatetraenoate + reduced [NADPH--hemoprotein reductase] + O2 = 5,6-epoxy-(8Z,11Z,14Z)-eicosatrienoate + oxidized [NADPH--hemoprotein reductase] + H2O + H(+). The catalysed reaction is (5Z,8Z,11Z,14Z)-eicosatetraenoate + reduced [NADPH--hemoprotein reductase] + O2 = (8R,9S)-epoxy-(5Z,11Z,14Z)-eicosatrienoate + oxidized [NADPH--hemoprotein reductase] + H2O + H(+). It catalyses the reaction (5Z,8Z,11Z,14Z)-eicosatetraenoate + reduced [NADPH--hemoprotein reductase] + O2 = (8S,9R)-epoxy-(5Z,11Z,14Z)-eicosatrienoate + oxidized [NADPH--hemoprotein reductase] + H2O + H(+). The enzyme catalyses (5Z,8Z,11Z,14Z)-eicosatetraenoate + reduced [NADPH--hemoprotein reductase] + O2 = (11R,12S)-epoxy-(5Z,8Z,14Z)-eicosatrienoate + oxidized [NADPH--hemoprotein reductase] + H2O + H(+). It carries out the reaction (5Z,8Z,11Z,14Z)-eicosatetraenoate + reduced [NADPH--hemoprotein reductase] + O2 = (11S,12R)-epoxy-(5Z,8Z,14Z)-eicosatrienoate + oxidized [NADPH--hemoprotein reductase] + H2O + H(+). The catalysed reaction is (5Z,8Z,11Z,14Z)-eicosatetraenoate + reduced [NADPH--hemoprotein reductase] + O2 = (14R,15S)-epoxy-(5Z,8Z,11Z)-eicosatrienoate + oxidized [NADPH--hemoprotein reductase] + H2O + H(+). It catalyses the reaction (5Z,8Z,11Z,14Z)-eicosatetraenoate + reduced [NADPH--hemoprotein reductase] + O2 = (14S,15R)-epoxy-(5Z,8Z,11Z)-eicosatrienoate + oxidized [NADPH--hemoprotein reductase] + H2O + H(+). The enzyme catalyses (15S)-hydroperoxy-(5Z,8Z,11Z,13E)-eicosatetraenoate = (13S)-hydroxy-(14S,15S)-epoxy-(5Z,8Z,11Z)-eicosatrienoate. It carries out the reaction (15S)-hydroperoxy-(5Z,8Z,11Z,13E)-eicosatetraenoate = (13R)-hydroxy-(14S,15S)-epoxy-(5Z,8Z,11Z)-eicosatrienoate. The catalysed reaction is (5Z,8Z,11Z,14Z,17Z)-eicosapentaenoate + reduced [NADPH--hemoprotein reductase] + O2 = (17R,18S)-epoxy-(5Z,8Z,11Z,14Z)-eicosatetraenoate + oxidized [NADPH--hemoprotein reductase] + H2O + H(+). It catalyses the reaction (5Z,8Z,11Z,14Z,17Z)-eicosapentaenoate + reduced [NADPH--hemoprotein reductase] + O2 = (17S,18R)-epoxy-(5Z,8Z,11Z,14Z)-eicosatetraenoate + oxidized [NADPH--hemoprotein reductase] + H2O + H(+). The enzyme catalyses (4Z,7Z,10Z,13Z,16Z,19Z)-docosahexaenoate + reduced [NADPH--hemoprotein reductase] + O2 = (19R,20S)-epoxy-(4Z,7Z,10Z,13Z,16Z)-docosapentaenoate + oxidized [NADPH--hemoprotein reductase] + H2O + H(+). It carries out the reaction (4Z,7Z,10Z,13Z,16Z,19Z)-docosahexaenoate + reduced [NADPH--hemoprotein reductase] + O2 = (19S,20R)-epoxy-(4Z,7Z,10Z,13Z,16Z)-docosapentaenoate + oxidized [NADPH--hemoprotein reductase] + H2O + H(+). The catalysed reaction is albendazole + reduced [NADPH--hemoprotein reductase] + O2 = hydroxyalbendazole + oxidized [NADPH--hemoprotein reductase] + H2O + H(+). It catalyses the reaction albendazole + reduced [NADPH--hemoprotein reductase] + O2 = albendazole S-oxide + oxidized [NADPH--hemoprotein reductase] + H2O + H(+). The enzyme catalyses fenbendazole + reduced [NADPH--hemoprotein reductase] + O2 = fenbendazole S-oxide + oxidized [NADPH--hemoprotein reductase] + H2O + H(+). The protein operates within lipid metabolism; arachidonate metabolism. Functionally, a cytochrome P450 monooxygenase involved in the metabolism of polyunsaturated fatty acids (PUFA) in the cardiovascular system. Mechanistically, uses molecular oxygen inserting one oxygen atom into a substrate, and reducing the second into a water molecule, with two electrons provided by NADPH via cytochrome P450 reductase (NADPH--hemoprotein reductase). Catalyzes the epoxidation of double bonds of PUFA. Converts arachidonic acid to four regioisomeric epoxyeicosatrienoic acids (EpETrE), likely playing a major role in the epoxidation of endogenous cardiac arachidonic acid pools. In endothelial cells, participates in eicosanoids metabolism by converting hydroperoxide species into hydroxy epoxy metabolites. In combination with 15-lipoxygenase metabolizes arachidonic acid and converts hydroperoxyicosatetraenoates (HpETEs) into hydroxy epoxy eicosatrienoates (HEETs), which are precursors of vasodilatory trihydroxyicosatrienoic acids (THETAs). This hydroperoxide isomerase activity is NADPH- and O2-independent. Catalyzes the monooxygenation of a various xenobiotics, such as danazol, amiodarone, terfenadine, astemizole, thioridazine, tamoxifen, cyclosporin A and nabumetone. Catalyzes hydroxylation of the anthelmintics albendazole and fenbendazole. Catalyzes the sulfoxidation of fenbedazole. This Homo sapiens (Human) protein is Cytochrome P450 2J2.